Reading from the N-terminus, the 421-residue chain is D-amino acid dehydrogenase (421 aa).

FAD is bound at residue 3–17 (VTILGAGVIGVTSAY).

It belongs to the DadA oxidoreductase family. FAD serves as cofactor.

It catalyses the reaction a D-alpha-amino acid + A + H2O = a 2-oxocarboxylate + AH2 + NH4(+). The protein operates within amino-acid degradation; D-alanine degradation; NH(3) and pyruvate from D-alanine: step 1/1. Functionally, oxidative deamination of D-amino acids. The polypeptide is D-amino acid dehydrogenase (Allorhizobium ampelinum (strain ATCC BAA-846 / DSM 112012 / S4) (Agrobacterium vitis (strain S4))).